We begin with the raw amino-acid sequence, 363 residues long: Succinyl-diaminopimelate desuccinylase (363 aa).

His-63 contributes to the Zn(2+) binding site. Asp-65 is an active-site residue. Asp-94 serves as a coordination point for Zn(2+). Catalysis depends on Glu-123, which acts as the Proton acceptor. Zn(2+) is bound by residues Glu-124, Glu-152, and His-337.

Belongs to the peptidase M20A family. DapE subfamily. Homodimer. The cofactor is Zn(2+). Co(2+) is required as a cofactor.

The enzyme catalyses N-succinyl-(2S,6S)-2,6-diaminopimelate + H2O = (2S,6S)-2,6-diaminopimelate + succinate. It participates in amino-acid biosynthesis; L-lysine biosynthesis via DAP pathway; LL-2,6-diaminopimelate from (S)-tetrahydrodipicolinate (succinylase route): step 3/3. Functionally, catalyzes the hydrolysis of N-succinyl-L,L-diaminopimelic acid (SDAP), forming succinate and LL-2,6-diaminopimelate (DAP), an intermediate involved in the bacterial biosynthesis of lysine and meso-diaminopimelic acid, an essential component of bacterial cell walls. This chain is Succinyl-diaminopimelate desuccinylase, found in Campylobacter concisus (strain 13826).